We begin with the raw amino-acid sequence, 424 residues long: Hemagglutinin-esterase (424 aa).

The N-terminal stretch at 1–16 (MFLLPRFVLVSCIIGS) is a signal peptide. The interval 7-127 (FVLVSCIIGS…SNDIWMQNKG (121 aa)) is esterase domain 1. At 17–392 (LGFDNPPTNV…PICVYDPLPI (376 aa)) the chain is on the virion surface side. The active-site Nucleophile is the S40. The cysteines at positions 44 and 65 are disulfide-linked. Residues N54, N89, N153, N236, and N301 are each glycosylated (N-linked (GlcNAc...) asparagine; by host). Intrachain disulfides connect C113/C162, C197/C276, and C205/C249. The tract at residues 128–266 (LFYTQLYKNM…GNYLAISNEL (139 aa)) is receptor binding. Residues 267–379 (LLTVPTKAIC…RCPTAADINT (113 aa)) are esterase domain 2. C307 and C312 are oxidised to a cystine. N316 is a glycosylation site (N-linked (GlcNAc...) asparagine; by host). Active-site charge relay system residues include D326 and H329. The cysteines at positions 347 and 371 are disulfide-linked. N358 is a glycosylation site (N-linked (GlcNAc...) asparagine; by host). A helical transmembrane segment spans residues 393–413 (ILLGILLGVAVIIIVVLLLYF). At 414–424 (MVDNGTRLHDA) the chain is on the intravirion side. N-linked (GlcNAc...) asparagine; by host glycosylation occurs at N417.

The protein belongs to the influenza type C/coronaviruses hemagglutinin-esterase family. In terms of assembly, homodimer; disulfide-linked. Forms a complex with the M protein in the pre-Golgi. Associates then with S-M complex to form a ternary complex S-M-HE. N-glycosylated in the host RER.

Its subcellular location is the virion membrane. The protein localises to the host cell membrane. It catalyses the reaction N-acetyl-9-O-acetylneuraminate + H2O = N-acetylneuraminate + acetate + H(+). The catalysed reaction is N-acetyl-4-O-acetylneuraminate + H2O = N-acetylneuraminate + acetate + H(+). Its function is as follows. Structural protein that makes short spikes at the surface of the virus. Contains receptor binding and receptor-destroying activities. Mediates de-O-acetylation of N-acetyl-4-O-acetylneuraminic acid, which is probably the receptor determinant recognized by the virus on the surface of erythrocytes and susceptible cells. This receptor-destroying activity is important for virus release as it probably helps preventing self-aggregation and ensures the efficient spread of the progeny virus from cell to cell. May serve as a secondary viral attachment protein for initiating infection, the spike protein being the major one. May become a target for both the humoral and the cellular branches of the immune system. In Bovine coronavirus (strain LSU-94LSS-051) (BCoV-LSU), this protein is Hemagglutinin-esterase.